We begin with the raw amino-acid sequence, 131 residues long: Profilin-6 (131 aa).

A disulfide bridge links cysteine 13 with cysteine 115. Residues 81-97 (AVIRGKKGSGGITVKKT) carry the Involved in PIP2 interaction motif. At threonine 111 the chain carries Phosphothreonine.

The protein belongs to the profilin family. Occurs in many kinds of cells as a complex with monomeric actin in a 1:1 ratio. Phosphorylated by MAP kinases.

The protein localises to the cytoplasm. It localises to the cytoskeleton. Its function is as follows. Binds to actin and affects the structure of the cytoskeleton. At high concentrations, profilin prevents the polymerization of actin, whereas it enhances it at low concentrations. In Zea mays (Maize), this protein is Profilin-6.